Consider the following 344-residue polypeptide: Glycerol-3-phosphate dehydrogenase [NAD(P)+] (344 aa).

Positions 23, 24, 44, and 118 each coordinate NADPH. The sn-glycerol 3-phosphate site is built by lysine 118, glycine 147, and threonine 149. Residue alanine 151 coordinates NADPH. 5 residues coordinate sn-glycerol 3-phosphate: lysine 203, aspartate 256, serine 266, arginine 267, and asparagine 268. Lysine 203 (proton acceptor) is an active-site residue. Arginine 267 is an NADPH binding site. Residues valine 291 and glutamate 293 each contribute to the NADPH site.

Belongs to the NAD-dependent glycerol-3-phosphate dehydrogenase family.

The protein localises to the cytoplasm. It catalyses the reaction sn-glycerol 3-phosphate + NAD(+) = dihydroxyacetone phosphate + NADH + H(+). It carries out the reaction sn-glycerol 3-phosphate + NADP(+) = dihydroxyacetone phosphate + NADPH + H(+). The protein operates within membrane lipid metabolism; glycerophospholipid metabolism. In terms of biological role, catalyzes the reduction of the glycolytic intermediate dihydroxyacetone phosphate (DHAP) to sn-glycerol 3-phosphate (G3P), the key precursor for phospholipid synthesis. The protein is Glycerol-3-phosphate dehydrogenase [NAD(P)+] of Vibrio cholerae serotype O1 (strain ATCC 39541 / Classical Ogawa 395 / O395).